Here is a 226-residue protein sequence, read N- to C-terminus: Cysteine and histidine-rich domain-containing protein RAR1 (226 aa).

Cys12, Cys17, Cys31, His34, Cys49, Cys50, Cys66, and His71 together coordinate Zn(2+). Residues 12 to 71 (CQRIGCNAMFTDDDNPQGSCQFHASGPFFHDGMKEWSCCKQRSHDFSLFLEIPGCKTGKH) form the CHORD 1 domain. A CCCH motif is present at residues 104-124 (CSRCRQGFFCSDHGSQPKEQI). Zn(2+) is bound by residues Cys159, Cys164, Cys178, His181, Cys196, Cys197, Cys213, and His218. One can recognise a CHORD 2 domain in the interval 159 to 218 (CKNKGCGQTFKERDNHETACSHHPGPAVFHDRLRGWKCCDVHVKEFDEFMEIPPCTKGWH).

In terms of assembly, interacts with HSP90-1, HSP90-2, SGT1A and SGT1B. Forms a ternary complex with SGT1A and barley HSP90.

Functionally, required specifically for plant innate immunity. Is essential for resistance conferred by multiple R genes recognizing different bacterial and oomycete pathogen isolates like avirulent P.syringae or H.parasitica (downy mildew). Contributes additively with SGT1B to RPP5-dependent resistance. Functions as a positive regulator of RPS5 accumulation by assisting its stabilization. May function as co-chaperone of HSP90-2 to positively regulate the steady-state accumulation of RPM1 and protect it from SGT1-mediated degradation. Acts as a negative regulator of pathogen-associated molecular pattern (PAMP)-triggered immunity. The protein is Cysteine and histidine-rich domain-containing protein RAR1 (RAR1) of Arabidopsis thaliana (Mouse-ear cress).